Reading from the N-terminus, the 526-residue chain is GMP synthase [glutamine-hydrolyzing] (526 aa).

The Glutamine amidotransferase type-1 domain maps to 3-199 (KVAIIDFGSQ…FIKIAGCKTD (197 aa)). Residue Cys-83 is the Nucleophile of the active site. Active-site residues include His-174 and Glu-176. The region spanning 200 to 392 (WTMNSFLDEQ…LGISDEILMR (193 aa)) is the GMPS ATP-PPase domain. Position 227–233 (227–233 (SGGVDSS)) interacts with ATP.

As to quaternary structure, homodimer.

The enzyme catalyses XMP + L-glutamine + ATP + H2O = GMP + L-glutamate + AMP + diphosphate + 2 H(+). The protein operates within purine metabolism; GMP biosynthesis; GMP from XMP (L-Gln route): step 1/1. Functionally, catalyzes the synthesis of GMP from XMP. The chain is GMP synthase [glutamine-hydrolyzing] from Ehrlichia canis (strain Jake).